Here is a 297-residue protein sequence, read N- to C-terminus: tRNA (guanine-N(7)-)-methyltransferase (297 aa).

S-adenosyl-L-methionine is bound by residues glycine 101, 124-125 (EI), 171-172 (NT), and cysteine 191. The active site involves aspartate 194. 270–272 (TEE) is an S-adenosyl-L-methionine binding site.

Belongs to the class I-like SAM-binding methyltransferase superfamily. TrmB family. As to quaternary structure, forms a complex with trm82.

The protein resides in the nucleus. It carries out the reaction guanosine(46) in tRNA + S-adenosyl-L-methionine = N(7)-methylguanosine(46) in tRNA + S-adenosyl-L-homocysteine. Its pathway is tRNA modification; N(7)-methylguanine-tRNA biosynthesis. Functionally, catalyzes the formation of N(7)-methylguanine at position 46 (m7G46) in tRNA. This is tRNA (guanine-N(7)-)-methyltransferase (trm8) from Aspergillus niger (strain ATCC MYA-4892 / CBS 513.88 / FGSC A1513).